The primary structure comprises 134 residues: Small ribosomal subunit protein uS9 (134 aa).

The disordered stretch occupies residues Asp-109–Arg-134. The segment covering Pro-118 to Arg-134 has biased composition (basic residues).

This sequence belongs to the universal ribosomal protein uS9 family.

The chain is Small ribosomal subunit protein uS9 from Methanococcus vannielii (strain ATCC 35089 / DSM 1224 / JCM 13029 / OCM 148 / SB).